We begin with the raw amino-acid sequence, 453 residues long: Probable glucan endo-1,3-beta-glucosidase eglC (453 aa).

Residues 1-18 (MQTRQLLALALAVAATEA) form the signal peptide. Catalysis depends on Glu-128, which acts as the Proton donor. N-linked (GlcNAc...) asparagine glycosylation is present at Asn-183. Catalysis depends on Glu-239, which acts as the Nucleophile. 3 N-linked (GlcNAc...) asparagine glycosylation sites follow: Asn-364, Asn-368, and Asn-376. Over residues 370–380 (TYPGSWNSTRP) the composition is skewed to polar residues. The disordered stretch occupies residues 370–423 (TYPGSWNSTRPGANGGSSGSSGSSGSSGSSGSSGSSGSGASGHSSSTGSSSFPS). Composition is skewed to low complexity over residues 389-402 (SSGS…SGSS) and 410-423 (SGHS…SFPS). Asn-430 carries the GPI-anchor amidated asparagine lipid modification. The propeptide at 431–453 (SASGLSGSLFGAVAAVFVALAAL) is removed in mature form.

The protein belongs to the glycosyl hydrolase 17 family. In terms of processing, the GPI-anchor is attached to the protein in the endoplasmic reticulum and serves to target the protein to the cell surface. There, the glucosamine-inositol phospholipid moiety is cleaved off and the GPI-modified mannoprotein is covalently attached via its lipidless GPI glycan remnant to the 1,6-beta-glucan of the outer cell wall layer.

Its subcellular location is the cell membrane. The protein localises to the secreted. It localises to the cell wall. The catalysed reaction is Hydrolysis of (1-&gt;3)-beta-D-glucosidic linkages in (1-&gt;3)-beta-D-glucans.. Glucanases play a role in cell expansion during growth, in cell-cell fusion during mating, and in spore release during sporulation. This enzyme may be involved in beta-glucan degradation and also function biosynthetically as a transglycosylase. The sequence is that of Probable glucan endo-1,3-beta-glucosidase eglC (eglC) from Aspergillus clavatus (strain ATCC 1007 / CBS 513.65 / DSM 816 / NCTC 3887 / NRRL 1 / QM 1276 / 107).